The sequence spans 439 residues: Tubulin beta chain (439 aa).

GTP contacts are provided by Gln-11, Glu-69, Ser-138, Gly-142, Thr-143, Gly-144, Asn-204, and Asn-226. Glu-69 contacts Mg(2+).

It belongs to the tubulin family. As to quaternary structure, dimer of alpha and beta chains. A typical microtubule is a hollow water-filled tube with an outer diameter of 25 nm and an inner diameter of 15 nM. Alpha-beta heterodimers associate head-to-tail to form protofilaments running lengthwise along the microtubule wall with the beta-tubulin subunit facing the microtubule plus end conferring a structural polarity. Microtubules usually have 13 protofilaments but different protofilament numbers can be found in some organisms and specialized cells. Requires Mg(2+) as cofactor.

The protein localises to the cytoplasm. The protein resides in the cytoskeleton. Tubulin is the major constituent of microtubules, a cylinder consisting of laterally associated linear protofilaments composed of alpha- and beta-tubulin heterodimers. Microtubules grow by the addition of GTP-tubulin dimers to the microtubule end, where a stabilizing cap forms. Below the cap, tubulin dimers are in GDP-bound state, owing to GTPase activity of alpha-tubulin. In Encephalitozoon cuniculi (strain GB-M1) (Microsporidian parasite), this protein is Tubulin beta chain (TUB2).